Here is a 175-residue protein sequence, read N- to C-terminus: Macro domain-containing protein TTE0995 (175 aa).

Residues 1–174 (MKEKIKLIKG…VYSKAYEELD (174 aa)) form the Macro domain.

Belongs to the MacroD-type family.

This Caldanaerobacter subterraneus subsp. tengcongensis (strain DSM 15242 / JCM 11007 / NBRC 100824 / MB4) (Thermoanaerobacter tengcongensis) protein is Macro domain-containing protein TTE0995.